The sequence spans 533 residues: D-3-phosphoglycerate dehydrogenase (533 aa).

At Ala2 the chain carries N-acetylalanine. At Ser14 the chain carries Phosphoserine. Lys21 is modified (N6-acetyllysine; alternate). A Glycyl lysine isopeptide (Lys-Gly) (interchain with G-Cter in SUMO1); alternate cross-link involves residue Lys21. Lys21 participates in a covalent cross-link: Glycyl lysine isopeptide (Lys-Gly) (interchain with G-Cter in SUMO2); alternate. At Lys58 the chain carries N6-acetyllysine. NAD(+)-binding positions include Thr78, 155-156 (RI), Asp175, Thr207, 234-236 (CAR), and Asp260. Position 78 is a phosphothreonine (Thr78). The active site involves Arg236. The active site involves Glu265. The active-site Proton donor is His283. NAD(+) is bound at residue 283-286 (HLGA).

It belongs to the D-isomer specific 2-hydroxyacid dehydrogenase family. Homotetramer.

It catalyses the reaction (2R)-3-phosphoglycerate + NAD(+) = 3-phosphooxypyruvate + NADH + H(+). The enzyme catalyses (R)-2-hydroxyglutarate + NAD(+) = 2-oxoglutarate + NADH + H(+). It carries out the reaction (S)-malate + NAD(+) = oxaloacetate + NADH + H(+). The protein operates within amino-acid biosynthesis; L-serine biosynthesis; L-serine from 3-phospho-D-glycerate: step 1/3. In terms of biological role, catalyzes the reversible oxidation of 3-phospho-D-glycerate to 3-phosphonooxypyruvate, the first step of the phosphorylated L-serine biosynthesis pathway. Also catalyzes the reversible oxidation of 2-hydroxyglutarate to 2-oxoglutarate and the reversible oxidation of (S)-malate to oxaloacetate. In Pongo abelii (Sumatran orangutan), this protein is D-3-phosphoglycerate dehydrogenase (PHGDH).